The primary structure comprises 130 residues: Glycoprotein hormone alpha-2 (130 aa).

A signal peptide spans 1-22 (MPMAPRVLLFCLLGLAVTEGHG). 4 disulfide bridges follow: Cys-32-Cys-90, Cys-49-Cys-104, Cys-58-Cys-120, and Cys-62-Cys-122. N-linked (GlcNAc...) asparagine glycosylation is found at Asn-38 and Asn-82.

This sequence belongs to the glycoprotein hormones subunit alpha family. In terms of assembly, heterodimer with GPHB5; this heterodimer interacts with thyroid-stimulating hormone receptor (TSHR), and hence stimulates cAMP production.

The protein localises to the secreted. In terms of biological role, functions as a heterodimeric glycoprotein hormone with GPHB5 able to bind and activate the thyroid-stimulating hormone receptor (TSHR), leading to increased cAMP production. Plays a central role in controlling thyroid cell metabolism. The sequence is that of Glycoprotein hormone alpha-2 (Gpha2) from Rattus norvegicus (Rat).